Reading from the N-terminus, the 214-residue chain is Large ribosomal subunit protein uL16-like (214 aa).

It belongs to the universal ribosomal protein uL16 family. In terms of assembly, component of a male germ cell-specific 60S large ribosomal subunit (LSU), which contains RPL10L and RPL39L, instead of RPL10 and RPL39 paralogs. The composition of the rest of the complex is similar to classical ribosomes. In terms of tissue distribution, testis-specific.

The protein resides in the cytoplasm. Its function is as follows. Testis-specific component of the ribosome, which is required for the transition from prophase to metaphase in male meiosis I. Compensates for the inactivated X-linked RPL10 paralog during spermatogenesis. The ribosome is a large ribonucleoprotein complex responsible for the synthesis of proteins in the cell. The male germ cell-specific ribosome displays a ribosomal polypeptide exit tunnel of distinct size and charge states compared with the classical ribosome. It is responsible for regulating the biosynthesis and folding of a subset of male germ-cell-specific proteins that are essential for the formation of sperm. The protein is Large ribosomal subunit protein uL16-like of Mus musculus (Mouse).